The primary structure comprises 426 residues: Glutamate-1-semialdehyde 2,1-aminomutase (426 aa).

The residue at position 265 (lysine 265) is an N6-(pyridoxal phosphate)lysine.

This sequence belongs to the class-III pyridoxal-phosphate-dependent aminotransferase family. HemL subfamily. In terms of assembly, homodimer. The cofactor is pyridoxal 5'-phosphate.

Its subcellular location is the cytoplasm. It catalyses the reaction (S)-4-amino-5-oxopentanoate = 5-aminolevulinate. Its pathway is porphyrin-containing compound metabolism; protoporphyrin-IX biosynthesis; 5-aminolevulinate from L-glutamyl-tRNA(Glu): step 2/2. This chain is Glutamate-1-semialdehyde 2,1-aminomutase, found in Cellvibrio japonicus (strain Ueda107) (Pseudomonas fluorescens subsp. cellulosa).